A 381-amino-acid chain; its full sequence is Homoserine O-succinyltransferase (381 aa).

In terms of domain architecture, AB hydrolase-1 spans 45 to 360; the sequence is NAVLVCHALN…PHGHDAFLLD (316 aa). Catalysis depends on Ser151, which acts as the Nucleophile. Arg221 is a binding site for substrate. Active-site residues include Asp321 and His354. Residue Asp355 coordinates substrate.

It belongs to the AB hydrolase superfamily. MetX family. As to quaternary structure, homodimer.

The protein resides in the cytoplasm. It carries out the reaction L-homoserine + succinyl-CoA = O-succinyl-L-homoserine + CoA. It functions in the pathway amino-acid biosynthesis; L-methionine biosynthesis via de novo pathway; O-succinyl-L-homoserine from L-homoserine: step 1/1. Transfers a succinyl group from succinyl-CoA to L-homoserine, forming succinyl-L-homoserine. This Burkholderia ambifaria (strain MC40-6) protein is Homoserine O-succinyltransferase.